Here is a 468-residue protein sequence, read N- to C-terminus: UDP-N-acetylmuramoyl-L-alanine--L-glutamate ligase (468 aa).

122-128 contacts ATP; it reads GTKGKST.

Belongs to the MurCDEF family. MurD2 subfamily.

The protein localises to the cytoplasm. It carries out the reaction UDP-N-acetyl-alpha-D-muramoyl-L-alanine + L-glutamate + ATP = UDP-N-acetyl-alpha-D-muramoyl-L-alanyl-L-glutamate + ADP + phosphate + H(+). Its pathway is cell wall biogenesis; peptidoglycan biosynthesis. Functionally, cell wall formation. Catalyzes the addition of L-glutamate to the nucleotide precursor UDP-N-acetylmuramoyl-L-alanine. This is UDP-N-acetylmuramoyl-L-alanine--L-glutamate ligase from Xylella fastidiosa (strain 9a5c).